The sequence spans 601 residues: ATP-dependent lipid A-core flippase (601 aa).

The next 5 helical transmembrane spans lie at 33-53, 72-92, 158-178, 255-275, and 283-303; these read CVAVVAMIAYAAITPFFAKLI, VSLMLIGLSVLRGIAGFLSEY, VIGLMALMVYQNPVLSLVFLV, LGGGVIHLISVAGVAGILYVV, and TITPGSLMAFIAAMAMMLSPI. Positions 34–315 constitute an ABC transmembrane type-1 domain; sequence VAVVAMIAYA…LSQVVSVMQR (282 aa). In terms of domain architecture, ABC transporter spans 347-583; that stretch reads IEYRHVSLVY…RGGYADLYAM (237 aa). Residue 381–388 participates in ATP binding; it reads GQSGSGKT.

Belongs to the ABC transporter superfamily. Lipid exporter (TC 3.A.1.106) family. As to quaternary structure, homodimer.

The protein localises to the cell inner membrane. It catalyses the reaction ATP + H2O + lipid A-core oligosaccharideSide 1 = ADP + phosphate + lipid A-core oligosaccharideSide 2.. In terms of biological role, involved in lipopolysaccharide (LPS) biosynthesis. Translocates lipid A-core from the inner to the outer leaflet of the inner membrane. Transmembrane domains (TMD) form a pore in the inner membrane and the ATP-binding domain (NBD) is responsible for energy generation. This Methylococcus capsulatus (strain ATCC 33009 / NCIMB 11132 / Bath) protein is ATP-dependent lipid A-core flippase.